The chain runs to 172 residues: 3-phenylpropionate/cinnamic acid dioxygenase subunit beta (172 aa).

It belongs to the bacterial ring-hydroxylating dioxygenase beta subunit family. This dioxygenase system consists of four proteins: the two subunits of the hydroxylase component (HcaE and HcaF), a ferredoxin (HcaC) and a ferredoxin reductase (HcaD).

It catalyses the reaction 3-phenylpropanoate + NADH + O2 + H(+) = 3-(cis-5,6-dihydroxycyclohexa-1,3-dien-1-yl)propanoate + NAD(+). It carries out the reaction (E)-cinnamate + NADH + O2 + H(+) = (2E)-3-(cis-5,6-dihydroxycyclohexa-1,3-dien-1-yl)prop-2-enoate + NAD(+). It participates in aromatic compound metabolism; 3-phenylpropanoate degradation. Functionally, part of the multicomponent 3-phenylpropionate dioxygenase. Converts 3-phenylpropionic acid (PP) and cinnamic acid (CI) into 3-phenylpropionate-dihydrodiol (PP-dihydrodiol) and cinnamic acid-dihydrodiol (CI-dihydrodiol), respectively. This is 3-phenylpropionate/cinnamic acid dioxygenase subunit beta from Shigella sonnei (strain Ss046).